The following is a 224-amino-acid chain: Putative cytochrome c-type biogenesis protein DbsD-like (224 aa).

A run of 5 helical transmembrane segments spans residues 32 to 52, 74 to 94, 104 to 124, 150 to 170, and 176 to 196; these read FIFL…ILPV, FLFC…ATLI, GIPT…LNIV, GIGI…LVWI, and IFTG…PIII.

Belongs to the DsbD family.

The protein localises to the plastid. It is found in the chloroplast membrane. Its function is as follows. Could be involved in cytochrome c synthesis. The sequence is that of Putative cytochrome c-type biogenesis protein DbsD-like from Pyropia yezoensis (Susabi-nori).